A 138-amino-acid chain; its full sequence is MLRTMMTAKIHRATVTHADLHYVGSVTVDRDLLDAADILVGERVSIVDVTNGARLDTYTIAGERGSGVLGINGAAAHLVDVGDVVILIAYGQMTTEEARALEPRVVHVDVGNRIRAVDADPTAPPAPGLERSPLAEPV.

The Schiff-base intermediate with substrate; via pyruvic acid role is filled by Ser25. A Pyruvic acid (Ser) modification is found at Ser25. Substrate is bound at residue Thr57. The active-site Proton donor is the Tyr58. Gly73–Ala75 contributes to the substrate binding site. Residues Val117 to Val138 are disordered.

This sequence belongs to the PanD family. Heterooctamer of four alpha and four beta subunits. It depends on pyruvate as a cofactor. Is synthesized initially as an inactive proenzyme, which is activated by self-cleavage at a specific serine bond to produce a beta-subunit with a hydroxyl group at its C-terminus and an alpha-subunit with a pyruvoyl group at its N-terminus.

The protein localises to the cytoplasm. The catalysed reaction is L-aspartate + H(+) = beta-alanine + CO2. The protein operates within cofactor biosynthesis; (R)-pantothenate biosynthesis; beta-alanine from L-aspartate: step 1/1. Functionally, catalyzes the pyruvoyl-dependent decarboxylation of aspartate to produce beta-alanine. This is Aspartate 1-decarboxylase from Clavibacter michiganensis subsp. michiganensis (strain NCPPB 382).